The primary structure comprises 395 residues: NAD(P)H-quinone oxidoreductase subunit H, chloroplastic (395 aa).

It belongs to the complex I 49 kDa subunit family. NDH is composed of at least 16 different subunits, 5 of which are encoded in the nucleus.

Its subcellular location is the plastid. It is found in the chloroplast thylakoid membrane. It carries out the reaction a plastoquinone + NADH + (n+1) H(+)(in) = a plastoquinol + NAD(+) + n H(+)(out). It catalyses the reaction a plastoquinone + NADPH + (n+1) H(+)(in) = a plastoquinol + NADP(+) + n H(+)(out). Its function is as follows. NDH shuttles electrons from NAD(P)H:plastoquinone, via FMN and iron-sulfur (Fe-S) centers, to quinones in the photosynthetic chain and possibly in a chloroplast respiratory chain. The immediate electron acceptor for the enzyme in this species is believed to be plastoquinone. Couples the redox reaction to proton translocation, and thus conserves the redox energy in a proton gradient. In Chloranthus spicatus (Chulantree), this protein is NAD(P)H-quinone oxidoreductase subunit H, chloroplastic.